Here is a 197-residue protein sequence, read N- to C-terminus: Protein Hikeshi (197 aa).

The required for F-X-F-G repeats-nucleoporins recognition and nuclear import stretch occupies residues 18–55; sequence VAEDKFVFDLPDYENINHVVVFMLGTVPFPEGMGGSVY. The flexible linker region involved in nuclear import of HSP70 proteins stretch occupies residues 124 to 134; that stretch reads QTPVGNAAVSS.

It belongs to the OPI10 family. Forms an asymmetric homodimer; required for binding and nuclear import of HSP70 proteins. Interacts with ATP-bound HSP70 proteins. Interacts with NUP62 and NUP153 (via F-X-F-G repeats). Interacts with HSPA8.

It localises to the cytoplasm. The protein resides in the cytosol. The protein localises to the nucleus. In terms of biological role, acts as a specific nuclear import carrier for HSP70 proteins following heat-shock stress: acts by mediating the nucleoporin-dependent translocation of ATP-bound HSP70 proteins into the nucleus. HSP70 proteins import is required to protect cells from heat shock damages. Does not translocate ADP-bound HSP70 proteins into the nucleus. This chain is Protein Hikeshi, found in Bos taurus (Bovine).